Reading from the N-terminus, the 237-residue chain is Chalcone--flavanone isomerase (237 aa).

Positions 50 and 192 each coordinate substrate.

This sequence belongs to the chalcone isomerase family.

The enzyme catalyses a chalcone = a flavanone.. The protein operates within secondary metabolite biosynthesis; flavonoid biosynthesis. Catalyzes the intramolecular cyclization of bicyclic chalcones into tricyclic (S)-flavanones. Responsible for the isomerization of 4,2',4',6'-tetrahydroxychalcone (also termed chalcone) into naringenin. The chain is Chalcone--flavanone isomerase (CHI) from Callistephus chinensis (China aster).